The sequence spans 312 residues: Ribosomal protein L11 methyltransferase (312 aa).

S-adenosyl-L-methionine is bound by residues T160, G181, D203, and N246.

This sequence belongs to the methyltransferase superfamily. PrmA family.

The protein localises to the cytoplasm. It catalyses the reaction L-lysyl-[protein] + 3 S-adenosyl-L-methionine = N(6),N(6),N(6)-trimethyl-L-lysyl-[protein] + 3 S-adenosyl-L-homocysteine + 3 H(+). In terms of biological role, methylates ribosomal protein L11. The protein is Ribosomal protein L11 methyltransferase of Staphylococcus aureus (strain MRSA252).